The following is a 202-amino-acid chain: Putative 3-methyladenine DNA glycosylase (202 aa).

This sequence belongs to the DNA glycosylase MPG family.

The protein is Putative 3-methyladenine DNA glycosylase of Staphylococcus aureus (strain Mu3 / ATCC 700698).